A 491-amino-acid polypeptide reads, in one-letter code: UDP-N-acetylmuramoyl-L-alanyl-D-glutamate--2,6-diaminopimelate ligase (491 aa).

Position 30 (serine 30) interacts with UDP-N-acetyl-alpha-D-muramoyl-L-alanyl-D-glutamate. 108-114 (GTNGKTT) provides a ligand contact to ATP. Residues asparagine 149, 150–151 (TT), serine 177, glutamine 183, and arginine 185 contribute to the UDP-N-acetyl-alpha-D-muramoyl-L-alanyl-D-glutamate site. Position 217 is an N6-carboxylysine (lysine 217). Residues arginine 383, 407-410 (DNPR), glycine 458, and glutamate 462 contribute to the meso-2,6-diaminopimelate site. The Meso-diaminopimelate recognition motif signature appears at 407 to 410 (DNPR).

This sequence belongs to the MurCDEF family. MurE subfamily. The cofactor is Mg(2+). Carboxylation is probably crucial for Mg(2+) binding and, consequently, for the gamma-phosphate positioning of ATP.

The protein localises to the cytoplasm. It carries out the reaction UDP-N-acetyl-alpha-D-muramoyl-L-alanyl-D-glutamate + meso-2,6-diaminopimelate + ATP = UDP-N-acetyl-alpha-D-muramoyl-L-alanyl-gamma-D-glutamyl-meso-2,6-diaminopimelate + ADP + phosphate + H(+). It participates in cell wall biogenesis; peptidoglycan biosynthesis. Functionally, catalyzes the addition of meso-diaminopimelic acid to the nucleotide precursor UDP-N-acetylmuramoyl-L-alanyl-D-glutamate (UMAG) in the biosynthesis of bacterial cell-wall peptidoglycan. This is UDP-N-acetylmuramoyl-L-alanyl-D-glutamate--2,6-diaminopimelate ligase from Listeria innocua serovar 6a (strain ATCC BAA-680 / CLIP 11262).